We begin with the raw amino-acid sequence, 686 residues long: Methionine--tRNA ligase (686 aa).

Positions 15 to 25 (PYANGSIHLGH) match the 'HIGH' region motif. Residues Cys-146, Cys-149, Cys-159, and Cys-162 each coordinate Zn(2+). Residues 332-336 (KMSKS) carry the 'KMSKS' region motif. Lys-335 is an ATP binding site. The region spanning 585–686 (AFEAVDMRIA…EGAQPGMRVM (102 aa)) is the tRNA-binding domain.

The protein belongs to the class-I aminoacyl-tRNA synthetase family. MetG type 1 subfamily. As to quaternary structure, homodimer. It depends on Zn(2+) as a cofactor.

The protein localises to the cytoplasm. It catalyses the reaction tRNA(Met) + L-methionine + ATP = L-methionyl-tRNA(Met) + AMP + diphosphate. Functionally, is required not only for elongation of protein synthesis but also for the initiation of all mRNA translation through initiator tRNA(fMet) aminoacylation. This Aliivibrio salmonicida (strain LFI1238) (Vibrio salmonicida (strain LFI1238)) protein is Methionine--tRNA ligase.